A 430-amino-acid polypeptide reads, in one-letter code: Adenylosuccinate synthetase (430 aa).

GTP contacts are provided by residues 12-18 and 40-42; these read GDEGKGK and GHT. Aspartate 13 functions as the Proton acceptor in the catalytic mechanism. Residues aspartate 13 and glycine 40 each coordinate Mg(2+). Residues 13–16, 38–41, threonine 130, arginine 144, glutamine 224, threonine 239, and arginine 303 contribute to the IMP site; these read DEGK and NAGH. Catalysis depends on histidine 41, which acts as the Proton donor. 299 to 305 is a substrate binding site; sequence VVTGRKR. GTP is bound by residues arginine 305, 331–333, and 413–415; these read KLD and STS.

The protein belongs to the adenylosuccinate synthetase family. As to quaternary structure, homodimer. It depends on Mg(2+) as a cofactor.

The protein resides in the cytoplasm. The catalysed reaction is IMP + L-aspartate + GTP = N(6)-(1,2-dicarboxyethyl)-AMP + GDP + phosphate + 2 H(+). The protein operates within purine metabolism; AMP biosynthesis via de novo pathway; AMP from IMP: step 1/2. Plays an important role in the de novo pathway of purine nucleotide biosynthesis. Catalyzes the first committed step in the biosynthesis of AMP from IMP. The polypeptide is Adenylosuccinate synthetase (Methylobacterium sp. (strain 4-46)).